A 267-amino-acid chain; its full sequence is Phosphate import ATP-binding protein PstB (267 aa).

Residues 21 to 262 (IAIRNLEFYY…PSKQQTEDYI (242 aa)) form the ABC transporter domain. An ATP-binding site is contributed by 53–60 (GPSGCGKS).

This sequence belongs to the ABC transporter superfamily. Phosphate importer (TC 3.A.1.7) family. As to quaternary structure, the complex is composed of two ATP-binding proteins (PstB), two transmembrane proteins (PstC and PstA) and a solute-binding protein (PstS).

The protein resides in the cell inner membrane. The enzyme catalyses phosphate(out) + ATP + H2O = ADP + 2 phosphate(in) + H(+). Functionally, part of the ABC transporter complex PstSACB involved in phosphate import. Responsible for energy coupling to the transport system. The sequence is that of Phosphate import ATP-binding protein PstB from Xylella fastidiosa (strain 9a5c).